Reading from the N-terminus, the 680-residue chain is WD repeat-containing protein 48 homolog (680 aa).

WD repeat units lie at residues 26 to 65 (QHRNGVNALQLDANNGKLYSAGRDAIIRVWNTRTDSSEKY), 71 to 110 (HHNDWVNDIVLCCNGRNLISASCDTTVKVWNAQKGFCMST), 113 to 152 (THRDYVQALAYAKDREQVASAGLDKAIFLWDVNTLTALTA), 164 to 203 (GSKDSIYSLAMNPSGTVIVSGSTENILRIWDPRTCMRIMK), 206 to 245 (GHTENVRCLVVSPDGNQVVSGSSDGTIKVWNLGQQRCVQT), 248 to 287 (VHKEGVWSLLMSENFQYIISGSRDRNIIVTEMRNPSNKTL), 290 to 329 (EEQAPVLSLGYNIDKTGVWATTWNSDIRCWKLPMYDRCTL), and 350 to 389 (KGGAAIKECAVLNDKRYIITKDSQDQVVVYDVLRVVKKEQ). The interval 592-616 (ETTPSGGNANNSLQNSQSDANSEGS) is disordered.

The protein belongs to the WD repeat WDR48 family. Catalytic component of the Usp12-46 deubiquitylase complex consisting of Usp12-46, Wdr20 and Uaf1; regulatory subunit that, together wtih Wdr20, stabilizes Usp12-46. The Usp12-46 deubiquitylase complex associates with arr/arrow; the interaction leads to deubiquitination and stabilization of arr/arrow.

Its function is as follows. Regulatory component of the Usp12-46 deubiquitylase complex. activates deubiquitination by increasing the catalytic turnover without increasing the affinity of deubiquitinating enzymes for the substrate. The complex deubiquitylates the wg/wingless-signaling receptor arr/arrow, which stabilizes the receptor and increases its concentration at the cell surface; this enhances the sensitivity of cells to wg/wingless-signal stimulation. This increases the amplitude and spatial range of the signaling response to the wg/wingless morphogen gradient, facilitating the precise concentration-dependent regulation of its target genes. Together with Wdr20 and Usp12-46 required for wg/wingless-mediated signaling in the wing imaginal disc and for wg/wingless-dependent regulation of intestinal stem cell proliferation. In Drosophila sechellia (Fruit fly), this protein is WD repeat-containing protein 48 homolog.